The primary structure comprises 574 residues: MSCARITVTLPYRSAKTSIQRGITHCPALLRPRFSACTPLASAVPLSSTPLINGDNSPLKNTHQHVEERSSKRREYLLEETARKLQRNDTESVEKLKLIDNIQRLGIGYYFEDAIDAVLRSPFSAEEEEDLFTAALRFRLLRHNGIQVTPEIFLKFKDERGEFDESDTLGLLSLYEASNLGVTGEEILEEAMEFAEPRLRRSLSELAAPLRSEVAQALDVPRHLRMARLEARRFIEQYGKQSDHDGDLLELAILDYNQVQAQHQSELTEITRWWKQLGLVEKLGFGRDRALECFMWTMGILPHPKYSSSRIESAKAAALLYVIDDIFDTYGKMDELILFTDAIRRWDLEAMEGLPEYMKICYMALYNTTNEICYRVLKDTGRIALPYLKSVWIETIEAYMVEVKWFSGGSAPKLEEYIENGASTVGAYMVLVHLFFLIGEGLTHQNVLFFKQKPYHKPFSAAGRIFRLWDDLGTSQEEEERGDMASSIRLFMKEYKLSTVEEARSCVLEEISRLWKDLNEGLISIKDALPLTIVKVALNIARTSQVVYKHEQHTYMLSVDNYVEALFFTPLLSS.

Residues M1–L40 constitute a chloroplast transit peptide. Polar residues predominate over residues I52–N61. The disordered stretch occupies residues I52 to S71. (2E)-geranyl diphosphate is bound by residues R287, D324, D328, R467, and D470. 2 residues coordinate Mg(2+): D324 and D328. The DDXXD motif motif lies at D324 to D328. D470, T474, and E478 together coordinate Mg(2+).

This sequence belongs to the terpene synthase family. Tpsb subfamily. Mg(2+) is required as a cofactor. Requires Mn(2+) as cofactor.

The protein localises to the plastid. It localises to the chloroplast. The catalysed reaction is (2E)-geranyl diphosphate + H2O = (R)-linalool + diphosphate. It functions in the pathway secondary metabolite biosynthesis; terpenoid biosynthesis. Its function is as follows. Monoterpene synthase that catalyzes the formation of (3R)-linalool from geranyl diphosphate. The sequence is that of R-linalool synthase, chloroplastic (LIS) from Ocimum basilicum (Sweet basil).